Consider the following 136-residue polypeptide: uncharacterized protein (136 aa).

This is an uncharacterized protein from Saccharomyces cerevisiae (strain ATCC 204508 / S288c) (Baker's yeast).